Reading from the N-terminus, the 354-residue chain is Uroporphyrinogen decarboxylase (354 aa).

Substrate contacts are provided by residues 27-31 (RQAGR), Asp-77, Tyr-154, Ser-209, and His-327.

The protein belongs to the uroporphyrinogen decarboxylase family. As to quaternary structure, homodimer.

It localises to the cytoplasm. It carries out the reaction uroporphyrinogen III + 4 H(+) = coproporphyrinogen III + 4 CO2. The protein operates within porphyrin-containing compound metabolism; protoporphyrin-IX biosynthesis; coproporphyrinogen-III from 5-aminolevulinate: step 4/4. In terms of biological role, catalyzes the decarboxylation of four acetate groups of uroporphyrinogen-III to yield coproporphyrinogen-III. This chain is Uroporphyrinogen decarboxylase, found in Shewanella amazonensis (strain ATCC BAA-1098 / SB2B).